Consider the following 376-residue polypeptide: Drebrin-like protein B (376 aa).

An ADF-H domain is found at serine 2–alanine 133. Positions lysine 175 to aspartate 231 form a coiled coil. Residues aspartate 202–lysine 242 are compositionally biased toward basic and acidic residues. Residues aspartate 202–asparagine 288 form a disordered region. The segment covering glutamate 268–glutamine 283 has biased composition (polar residues). The SH3 domain occupies aspartate 317–glutamate 376.

This sequence belongs to the ABP1 family.

It localises to the cytoplasm. It is found in the cytoskeleton. The protein localises to the cell projection. Its subcellular location is the lamellipodium. The protein resides in the ruffle. It localises to the cell cortex. It is found in the cytosol. The protein localises to the synapse. Its subcellular location is the perikaryon. The protein resides in the neuron projection. It localises to the cell membrane. It is found in the cytoplasmic vesicle. The protein localises to the clathrin-coated vesicle membrane. Its subcellular location is the golgi apparatus membrane. The protein resides in the podosome. It localises to the early endosome. It is found in the dendrite. The protein localises to the postsynaptic density. Adapter protein that binds F-actin and dynamin, and thereby plays a role in receptor-mediated endocytosis. Plays a role in the reorganization of the actin cytoskeleton, formation of cell projections, such as neurites, in neuron morphogenesis and synapse formation. Does not bind G-actin and promote actin polymerization by itself, but excerts its functions by interaction with other proteins. Required for the formation of organized podosome rosettes. The protein is Drebrin-like protein B (dbnl-b) of Xenopus laevis (African clawed frog).